A 225-amino-acid chain; its full sequence is MKLFVGLGNPGARYAGNRHNIGYMAVEAIAADHGFGPWRARFQGLTSEGRLGSEQVLLLKPETFMNLSGQSVGEAMRFYKLTPADVIVFHDELDLAPGKLRLKQGGGHAGHNGLRSIHAHVGEAYGRVRLGIGHPGHKDAVAPYVLSDFAKADQDWLADLLRGIADGAEALARGDGAKFQNAVALRMQPPKPEKPKPAAKAPEAQAPEAAPDERSALQKLADRFR.

Y14 lines the tRNA pocket. The Proton acceptor role is filled by H19. 3 residues coordinate tRNA: F64, N66, and N112. The interval 182-225 is disordered; it reads AVALRMQPPKPEKPKPAAKAPEAQAPEAAPDERSALQKLADRFR. The segment covering 198–209 has biased composition (low complexity); the sequence is AAKAPEAQAPEA. The segment covering 211–225 has biased composition (basic and acidic residues); it reads PDERSALQKLADRFR.

This sequence belongs to the PTH family. Monomer.

The protein localises to the cytoplasm. The enzyme catalyses an N-acyl-L-alpha-aminoacyl-tRNA + H2O = an N-acyl-L-amino acid + a tRNA + H(+). In terms of biological role, hydrolyzes ribosome-free peptidyl-tRNAs (with 1 or more amino acids incorporated), which drop off the ribosome during protein synthesis, or as a result of ribosome stalling. Catalyzes the release of premature peptidyl moieties from peptidyl-tRNA molecules trapped in stalled 50S ribosomal subunits, and thus maintains levels of free tRNAs and 50S ribosomes. The protein is Peptidyl-tRNA hydrolase of Cereibacter sphaeroides (strain ATCC 17029 / ATH 2.4.9) (Rhodobacter sphaeroides).